A 100-amino-acid polypeptide reads, in one-letter code: MELTPREKDKLLIFTAALLAERRKARGLKLNYPEAVALISAAVMEGARDGKSVAALMSEGRTVLTRADVMDGIAEMIPDIQVEATFPDGTKLVTVHQPIV.

It belongs to the urease gamma subunit family. Heterotrimer of UreA (gamma), UreB (beta) and UreC (alpha) subunits. Three heterotrimers associate to form the active enzyme.

Its subcellular location is the cytoplasm. The catalysed reaction is urea + 2 H2O + H(+) = hydrogencarbonate + 2 NH4(+). It participates in nitrogen metabolism; urea degradation; CO(2) and NH(3) from urea (urease route): step 1/1. The sequence is that of Urease subunit gamma from Variovorax paradoxus (strain S110).